The primary structure comprises 304 residues: Homoserine kinase (304 aa).

90–100 (PLARGLGSSAS) is a binding site for ATP.

This sequence belongs to the GHMP kinase family. Homoserine kinase subfamily.

It is found in the cytoplasm. The enzyme catalyses L-homoserine + ATP = O-phospho-L-homoserine + ADP + H(+). Its pathway is amino-acid biosynthesis; L-threonine biosynthesis; L-threonine from L-aspartate: step 4/5. Its function is as follows. Catalyzes the ATP-dependent phosphorylation of L-homoserine to L-homoserine phosphate. The protein is Homoserine kinase of Staphylococcus aureus (strain MSSA476).